The primary structure comprises 182 residues: ATP-dependent protease subunit HslV (182 aa).

Residue T12 is part of the active site. A167, C170, and T173 together coordinate Na(+).

It belongs to the peptidase T1B family. HslV subfamily. In terms of assembly, a double ring-shaped homohexamer of HslV is capped on each side by a ring-shaped HslU homohexamer. The assembly of the HslU/HslV complex is dependent on binding of ATP.

It localises to the cytoplasm. The enzyme catalyses ATP-dependent cleavage of peptide bonds with broad specificity.. Its activity is regulated as follows. Allosterically activated by HslU binding. Functionally, protease subunit of a proteasome-like degradation complex believed to be a general protein degrading machinery. The polypeptide is ATP-dependent protease subunit HslV (Pelodictyon phaeoclathratiforme (strain DSM 5477 / BU-1)).